Consider the following 494-residue polypeptide: 4-trimethylaminobutyraldehyde dehydrogenase (494 aa).

Position 2 is an N-acetylserine; in 4-trimethylaminobutyraldehyde dehydrogenase, N-terminally processed (Ser-2). Lys-30 bears the N6-acetyllysine; alternate mark. Position 30 is an N6-succinyllysine; alternate (Lys-30). Lys-59 is modified (N6-succinyllysine). NAD(+) is bound by residues Lys-180 and 232–236 (GSVPT). Catalysis depends on Glu-254, which acts as the Proton acceptor. Cys-288 functions as the Nucleophile in the catalytic mechanism. Lys-298 is modified (N6-acetyllysine). An N6-acetyllysine; alternate modification is found at Lys-303. Lys-303 carries the N6-succinyllysine; alternate modification. Lys-344 carries the N6-acetyllysine modification. Glu-391 contributes to the NAD(+) binding site.

This sequence belongs to the aldehyde dehydrogenase family. As to quaternary structure, homotetramer. In terms of tissue distribution, detected in brain (at protein level). High expression in adult liver, skeletal muscle, and kidney. Low levels in heart, pancreas, lung and brain. Expressed in all regions of the brain. Expression levels are variable in the different brain areas, with the highest levels in the spinal cord and the lowest in the occipital pole.

It is found in the cytoplasm. It localises to the cytosol. It carries out the reaction 4-(trimethylamino)butanal + NAD(+) + H2O = 4-(trimethylamino)butanoate + NADH + 2 H(+). It catalyses the reaction an aldehyde + NAD(+) + H2O = a carboxylate + NADH + 2 H(+). The catalysed reaction is 4-aminobutanal + NAD(+) + H2O = 4-aminobutanoate + NADH + 2 H(+). The enzyme catalyses formaldehyde + NAD(+) + H2O = formate + NADH + 2 H(+). It carries out the reaction acetaldehyde + NAD(+) + H2O = acetate + NADH + 2 H(+). It catalyses the reaction imidazole-4-acetaldehyde + NAD(+) + H2O = imidazole-4-acetate + NADH + 2 H(+). The catalysed reaction is acrolein + NAD(+) + H2O = acrylate + NADH + 2 H(+). The enzyme catalyses (5-hydroxyindol-3-yl)acetaldehyde + NAD(+) + H2O = (5-hydroxyindol-3-yl)acetate + NADH + 2 H(+). It carries out the reaction 3,4-dihydroxyphenylacetaldehyde + NAD(+) + H2O = 3,4-dihydroxyphenylacetate + NADH + 2 H(+). It catalyses the reaction spermine monoaldehyde + NAD(+) + H2O = N-(2-carboxyethyl)spermidine + NADH + 2 H(+). The catalysed reaction is propanal + NAD(+) + H2O = propanoate + NADH + 2 H(+). The enzyme catalyses butanal + NAD(+) + H2O = butanoate + NADH + 2 H(+). It carries out the reaction pentanal + NAD(+) + H2O = pentanoate + NADH + 2 H(+). It catalyses the reaction hexanal + NAD(+) + H2O = hexanoate + NADH + 2 H(+). The protein operates within amine and polyamine biosynthesis; carnitine biosynthesis. Converts gamma-trimethylaminobutyraldehyde into gamma-butyrobetaine with high efficiency (in vitro). Can catalyze the irreversible oxidation of a broad range of aldehydes to the corresponding acids in an NAD-dependent reaction, but with low efficiency. Catalyzes the oxidation of aldehydes arising from biogenic amines and polyamines. This Homo sapiens (Human) protein is 4-trimethylaminobutyraldehyde dehydrogenase (ALDH9A1).